A 438-amino-acid polypeptide reads, in one-letter code: Glutamyl-tRNA reductase (438 aa).

Substrate is bound by residues 55-58, Ser-118, 123-125, and Gln-129; these read TCNR and ETQ. The active-site Nucleophile is Cys-56. Residue 198–203 coordinates NADP(+); the sequence is GAGDMI.

It belongs to the glutamyl-tRNA reductase family. As to quaternary structure, homodimer.

It carries out the reaction (S)-4-amino-5-oxopentanoate + tRNA(Glu) + NADP(+) = L-glutamyl-tRNA(Glu) + NADPH + H(+). It participates in porphyrin-containing compound metabolism; protoporphyrin-IX biosynthesis; 5-aminolevulinate from L-glutamyl-tRNA(Glu): step 1/2. Its function is as follows. Catalyzes the NADPH-dependent reduction of glutamyl-tRNA(Glu) to glutamate 1-semialdehyde (GSA). The chain is Glutamyl-tRNA reductase from Polynucleobacter asymbioticus (strain DSM 18221 / CIP 109841 / QLW-P1DMWA-1) (Polynucleobacter necessarius subsp. asymbioticus).